The primary structure comprises 412 residues: Esterase EstD (412 aa).

The first 20 residues, 1 to 20 (MRLTVFLSLFLGVMVFGAFD), serve as a signal peptide directing secretion. The active-site Nucleophile is the Ser243. Catalysis depends on charge relay system residues Asp347 and His378.

Belongs to the AB hydrolase superfamily. Esterase 10 family. As to quaternary structure, exists mainly as a monomer and, to some extent as a dimer.

It catalyses the reaction a carboxylic ester + H2O = an alcohol + a carboxylate + H(+). With respect to regulation, is strongly inhibited by phenylmethylsulfonyl fluoride, a serine protease inhibitor, and by mercury chloride. Diethyl pyrocarbonate, a histidine modifier, also inhibits the reaction, albeit less pronounced than phenylmethylsulfonyl fluoride. EDTA and dithiothreitol have no effect on enzyme activity. Its function is as follows. Exhibits significant esterase activity with a preference for short acyl chain esters (C4-C8) in vitro. Its physiological function is not known. Displays neither proteolytic activity using casein as substrate, nor peptidase activity when assayed with L-leucine p-nitroanilide and L-proline p-nitroanilide. The polypeptide is Esterase EstD (Thermotoga maritima (strain ATCC 43589 / DSM 3109 / JCM 10099 / NBRC 100826 / MSB8)).